Consider the following 342-residue polypeptide: Uricase (342 aa).

Residues lysine 35 and threonine 80 each act as charge relay system in the active site. Urate is bound by residues threonine 80, aspartate 81, phenylalanine 204, arginine 221, valine 269, glutamine 270, and asparagine 296. Histidine 298 serves as the catalytic Charge relay system. A Microbody targeting signal motif is present at residues 340 to 342; it reads SHL.

It belongs to the uricase family. Malpighian tubules.

The protein resides in the peroxisome. The catalysed reaction is urate + O2 + H2O = 5-hydroxyisourate + H2O2. The protein operates within purine metabolism; urate degradation; (S)-allantoin from urate: step 1/3. Repressed by 20-hydroxyecdysone. Catalyzes the oxidation of uric acid to 5-hydroxyisourate, which is further processed to form (S)-allantoin. In Drosophila virilis (Fruit fly), this protein is Uricase (Uro).